The following is a 103-amino-acid chain: Large ribosomal subunit protein bL21 (103 aa).

The protein belongs to the bacterial ribosomal protein bL21 family. As to quaternary structure, part of the 50S ribosomal subunit. Contacts protein L20.

Its function is as follows. This protein binds to 23S rRNA in the presence of protein L20. This chain is Large ribosomal subunit protein bL21, found in Chromohalobacter salexigens (strain ATCC BAA-138 / DSM 3043 / CIP 106854 / NCIMB 13768 / 1H11).